Reading from the N-terminus, the 352-residue chain is MTEQTIAHKQKQLTKQVAAFAQPETKNSLIQLLNTFIPFFGLWFLAYLSLDVSYLLTLALTVIAAGFLTRIFIIFHDCCHQSFFKQKRYNHILGFLTGVLTLFPYLQWQHSHSIHHATSSNLDKRGTGDIWMLTVNEYKAASRRTKLAYRLYRNPFIMFILGPIYVFLITNRFNKKGARRKERVNTYLTNLAIVALAAACCLIFGWQSFLLVQGPIFLISGSIGVWLFYVQHTFEDSYFEADENWSYVQAAVEGSSFYKLPKLLQWLTGNIGYHHVHHLSPKVPNYKLEVAHEHHEPLKNVPTITLKTSLQSLAFRLWDEDNKQFVSFRAIKHIPVSLPPDSPEKQKLRKNA.

The next 2 membrane-spanning stretches (helical) occupy residues 28 to 48 and 55 to 75; these read SLIQ…LAYL and LLTL…FIIF. The short motif at 76 to 80 is the Histidine box-1 element; it reads HDCCH. A helical membrane pass occupies residues 89-109; the sequence is YNHILGFLTGVLTLFPYLQWQ. Residues 112–116 carry the Histidine box-2 motif; it reads HSIHH. Transmembrane regions (helical) follow at residues 151–171, 186–206, and 209–229; these read LYRN…LITN, TYLT…IFGW, and FLLV…WLFY. The Histidine box-3 motif lies at 274–278; sequence HHVHH.

It belongs to the fatty acid desaturase type 1 family.

The protein localises to the cell membrane. It participates in lipid metabolism; fatty acid metabolism. Functionally, catalyzes the introduction of a cis-double bond at the delta(5) position of existing saturated fatty acids attached to membrane phospholipids. It is not strictly specific for palmitic acid (C16) but can also accept C14 as well as C18 species to yield unsaturated fatty acids. In Bacillus subtilis (strain 168), this protein is Fatty acid desaturase (des).